The following is a 943-amino-acid chain: Translation initiation factor IF-2 (943 aa).

The span at 99–113 shows a compositional bias: low complexity; sequence VKAAQTQAAPVQPEQ. The segment at 99–354 is disordered; the sequence is VKAAQTQAAP…LEPNQHAFQA (256 aa). Positions 117–141 are enriched in basic and acidic residues; that stretch reads DAVKARAEAAARAEARAKAEAEAAK. A compositionally biased stretch (low complexity) spans 145 to 172; the sequence is AKAGNKAKPAAQKPTEAKAETAPVAAET. A compositionally biased stretch (basic and acidic residues) spans 173–197; the sequence is KPAEPKEKAVKPKHERNGKGKDAKK. Over residues 200 to 215 the composition is skewed to low complexity; it reads KPAAPAVPQPVVSAEE. A compositionally biased stretch (basic and acidic residues) spans 216–250; it reads QAQRDEEARRAAALRAHQEALLKEKQERQARREAM. Low complexity predominate over residues 251–264; the sequence is KQQAEQQAKAAQEA. Composition is skewed to basic and acidic residues over residues 295–308 and 319–335; these read AKKE…DEGQ and GGRD…ERVR. The tr-type G domain occupies 443–612; sequence PRPPVVTVMG…LLEAEVLELT (170 aa). Positions 452-459 are G1; sequence GHVDHGKT. 452–459 is a GTP binding site; that stretch reads GHVDHGKT. A G2 region spans residues 477–481; it reads GITQH. Positions 498 to 501 are G3; it reads DTPG. Residues 498-502 and 552-555 contribute to the GTP site; these read DTPGH and NKID. The interval 552 to 555 is G4; the sequence is NKID. The tract at residues 588-590 is G5; that stretch reads SAK.

It belongs to the TRAFAC class translation factor GTPase superfamily. Classic translation factor GTPase family. IF-2 subfamily.

It is found in the cytoplasm. In terms of biological role, one of the essential components for the initiation of protein synthesis. Protects formylmethionyl-tRNA from spontaneous hydrolysis and promotes its binding to the 30S ribosomal subunits. Also involved in the hydrolysis of GTP during the formation of the 70S ribosomal complex. The sequence is that of Translation initiation factor IF-2 from Neisseria gonorrhoeae (strain NCCP11945).